The sequence spans 131 residues: Profilin-9 (131 aa).

Cys-13 and Cys-115 are joined by a disulfide. Residues Ala-81–Thr-97 carry the Involved in PIP2 interaction motif. Thr-111 is subject to Phosphothreonine.

Belongs to the profilin family. In terms of assembly, occurs in many kinds of cells as a complex with monomeric actin in a 1:1 ratio. Post-translationally, phosphorylated by MAP kinases.

The protein resides in the cytoplasm. It localises to the cytoskeleton. Functionally, binds to actin and affects the structure of the cytoskeleton. At high concentrations, profilin prevents the polymerization of actin, whereas it enhances it at low concentrations. The chain is Profilin-9 from Phleum pratense (Common timothy).